Consider the following 1110-residue polypeptide: Serine/threonine-protein kinase PknK (1110 aa).

The Protein kinase domain occupies 26–283; sequence FDNVEEIGRG…TAADVGEELR (258 aa). Residues 32 to 40 and Lys55 contribute to the ATP site; that span reads IGRGGFGVV. Arg148 serves as the catalytic Proton acceptor. Mg(2+)-binding residues include Asn154 and Asp167. Residues 308–343 are disordered; that stretch reads RSPEAHAAHRHTGGGTPTVPTPPTPATKYRPSVPTG.

It belongs to the protein kinase superfamily. Ser/Thr protein kinase family.

It catalyses the reaction L-seryl-[protein] + ATP = O-phospho-L-seryl-[protein] + ADP + H(+). The catalysed reaction is L-threonyl-[protein] + ATP = O-phospho-L-threonyl-[protein] + ADP + H(+). The chain is Serine/threonine-protein kinase PknK (pknK) from Mycobacterium bovis (strain ATCC BAA-935 / AF2122/97).